Here is a 263-residue protein sequence, read N- to C-terminus: 3-deoxy-manno-octulosonate cytidylyltransferase (263 aa).

This sequence belongs to the KdsB family.

The protein resides in the cytoplasm. The catalysed reaction is 3-deoxy-alpha-D-manno-oct-2-ulosonate + CTP = CMP-3-deoxy-beta-D-manno-octulosonate + diphosphate. It functions in the pathway nucleotide-sugar biosynthesis; CMP-3-deoxy-D-manno-octulosonate biosynthesis; CMP-3-deoxy-D-manno-octulosonate from 3-deoxy-D-manno-octulosonate and CTP: step 1/1. The protein operates within bacterial outer membrane biogenesis; lipopolysaccharide biosynthesis. Activates KDO (a required 8-carbon sugar) for incorporation into bacterial lipopolysaccharide in Gram-negative bacteria. This Burkholderia vietnamiensis (strain G4 / LMG 22486) (Burkholderia cepacia (strain R1808)) protein is 3-deoxy-manno-octulosonate cytidylyltransferase.